A 419-amino-acid chain; its full sequence is UDP-N-acetylglucosamine 1-carboxyvinyltransferase (419 aa).

Phosphoenolpyruvate is bound at residue 22-23 (KN). Residue arginine 91 participates in UDP-N-acetyl-alpha-D-glucosamine binding. Cysteine 115 acts as the Proton donor in catalysis. Cysteine 115 carries the post-translational modification 2-(S-cysteinyl)pyruvic acid O-phosphothioketal. Residues 120 to 124 (RPVDL), 160 to 163 (KVSV), aspartate 305, and valine 327 each bind UDP-N-acetyl-alpha-D-glucosamine.

This sequence belongs to the EPSP synthase family. MurA subfamily.

It localises to the cytoplasm. The catalysed reaction is phosphoenolpyruvate + UDP-N-acetyl-alpha-D-glucosamine = UDP-N-acetyl-3-O-(1-carboxyvinyl)-alpha-D-glucosamine + phosphate. Its pathway is cell wall biogenesis; peptidoglycan biosynthesis. In terms of biological role, cell wall formation. Adds enolpyruvyl to UDP-N-acetylglucosamine. This chain is UDP-N-acetylglucosamine 1-carboxyvinyltransferase, found in Shigella sonnei (strain Ss046).